A 150-amino-acid chain; its full sequence is Large ribosomal subunit protein bL9 (150 aa).

This sequence belongs to the bacterial ribosomal protein bL9 family.

Functionally, binds to the 23S rRNA. The chain is Large ribosomal subunit protein bL9 from Vesicomyosocius okutanii subsp. Calyptogena okutanii (strain HA).